A 211-amino-acid chain; its full sequence is V-type ATP synthase subunit D (211 aa).

This sequence belongs to the V-ATPase D subunit family.

Functionally, produces ATP from ADP in the presence of a proton gradient across the membrane. This is V-type ATP synthase subunit D from Fusobacterium nucleatum subsp. nucleatum (strain ATCC 25586 / DSM 15643 / BCRC 10681 / CIP 101130 / JCM 8532 / KCTC 2640 / LMG 13131 / VPI 4355).